Consider the following 1791-residue polypeptide: 1-phosphatidylinositol-3-phosphate 5-kinase FAB1B (1791 aa).

An FYVE-type zinc finger spans residues aspartate 39–glutamate 105. Zn(2+) contacts are provided by cysteine 45, cysteine 48, cysteine 61, cysteine 64, cysteine 69, cysteine 72, cysteine 97, and cysteine 100. Disordered stretches follow at residues histidine 166 to serine 186, glutamate 279 to threonine 370, serine 770 to valine 790, and glutamine 834 to serine 859. Basic and acidic residues predominate over residues glutamate 279 to cysteine 293. The segment covering proline 324–alanine 345 has biased composition (acidic residues). A compositionally biased stretch (basic and acidic residues) spans glutamate 838–phenylalanine 850. The stretch at glutamate 1077–asparagine 1111 forms a coiled coil. The segment covering asparagine 1151–proline 1164 has biased composition (basic and acidic residues). Residues asparagine 1151–valine 1242 form a disordered region. 2 stretches are compositionally biased toward polar residues: residues lysine 1167–asparagine 1188 and threonine 1196–glutamine 1206. In terms of domain architecture, PIPK spans serine 1433–phenylalanine 1758. The interval asparagine 1769–glutamate 1791 is disordered. The segment covering valine 1771–glutamate 1791 has biased composition (polar residues).

As to quaternary structure, component of the PI(3,5)P2 regulatory complex at least composed of ATG18, SAC/FIG4, FAB1 and VAC14. Mg(2+) serves as cofactor. Requires Mn(2+) as cofactor. As to expression, ubiquitous with highest expression levels in the root hair zone, pollen, and stamens.

It is found in the endosome membrane. It carries out the reaction a 1,2-diacyl-sn-glycero-3-phospho-(1D-myo-inositol-3-phosphate) + ATP = a 1,2-diacyl-sn-glycero-3-phospho-(1D-myo-inositol-3,5-bisphosphate) + ADP + H(+). Functionally, the PI(3,5)P2 regulatory complex regulates both the synthesis and turnover of phosphatidylinositol 3,5-bisphosphate (PtdIns(3,5)P2). Catalyzes the phosphorylation of phosphatidylinositol 3-phosphate on the fifth hydroxyl of the myo-inositol ring, to form phosphatidylinositol 3,5-bisphosphate. Plays an important role in maintenance of endomembrane homeostasis including endocytosis, vacuole formation, and vacuolar acidification processes. Required for development of viable pollen. Might mediate recycling of auxin transporters. This Arabidopsis thaliana (Mouse-ear cress) protein is 1-phosphatidylinositol-3-phosphate 5-kinase FAB1B (FAB1B).